The following is a 4687-amino-acid chain: MVAGMLMPLDQLRAIYEVLFREGVMVAKKDRRPRSLHPHVPGVTNLQVMRAMTSLKARGLVRETFAWCHFYWYLTNEGIDHLRQYLHLPPEIVPASLQRVRRPVAMVMPARRRSPHVQTMQGPLGCPPKRGPLPAEDPAREERQVYRRKEREEGAPETPVVSATIVGTLARPGPEPTPATDERDRVQKKTSTKWVNKHLIKAQRHISDLYEDLRDGHNLISLLEVLSGDSLPREKGRMRFHKLQNVQIALDYLRHRQVKLVNIRNDDIADGNPKLTLGLIWTIILHFKISDIQVSGQSEDMTAKEKLLLWSQRMVEGYQGLRCDNFTTSWRDGRLFNAIIHRHKPMLIDMNKVYRQTNLENLDQAFSVAERDLGVTRLLDPEDVDVPQPDEKSIITYVSSLYDAMPRVPGAQDGVRANELQLRWQEYRELVLLLLQWIRHHTAAFEERKFPSSFEEIEILWCQFLKFKETELPAKEADKNRSKGIYQSLEGAVQAGQLKIPPGYHPLDVEKEWGKLHVAILEREKQLRSEFERLECLQRIVSKLQMEAGLCEEQLYQADSLLQSDIRLLASGKAAQRAGEVERDLDKADGMIRLLFNDVQTLKDGRHPQGEQMYRRVYRLHERLVAIRTEYNLRLKAGVGAPVTQVTLQSTQRRPELEDSTLRYLHDLLAWVEENQRRIDGAEWGVDLPSVEAQLGSHRGMHQSIEEFRAKIERARNDESQLSPATRGAYRDCLGRLDLQYAKLLNSSKARLRSLESLHGFVAAATKELMWLNEKEEEEVGFDWSDRNTNMAAKKESYSALMRELEMKEKKIKEIQNTGDRLLREDHPARPTVESFQAALQTQWSWMLQLCCCIEAHLKENTAYFQFFSDVREAEEQLQKLQETLRRKYSCDRSITVTRLEDLLQDAQDEKEQLNEYKGHLSGLAKRAKAIVQLKPRNPAHPVRGHVPLLAVCDYKQVEVTVHKGDQCQLVGPAQPFHWKVLSSSGSEAAVPSVCFLVPPPNQEAQEAVARLEAQHQALVTLWHQLHVDMKSLLAWQSLNRDIQLIRSWSLVTFRTLKPEEQRQALRNLELHYQAFLRDSQDAGGFGPEDRLVAEREYGSCSRHYQQLLQSLEQGEQEESRCQRCISELKDIRLQLEACETRTVHRLRLPLDKDPARECAQRIAEQQKAQAEVEGLGKGVARLSAEAEKVLALPEPSPAAPTLRSELELTLGKLEQVRSLSAIYLEKLKTISLVIRSTQGAEEVLKTHEEHLKEAQAVPATLQELEVTKASLKKLRAQAEAQQPVFNTLRDELRGAQEVGERLQQRHGERDVEVERWRERVTQLLERWQAVLAQTDVRQRELEQLGRQLRYYRESADPLSSWLQDAKSRQEQIQAVPIANSQAAREQLRQEKALLEEIERHGEKVEECQKFAKQYINAIKDYELQLITYKAQLEPVASPAKKPKVQSGSESVIQEYVDLRTRYSELTTLTSQYIKFISETLRRMEEEERLAEQQRAEERERLAEVEAALEKQRQLAEAHAQAKAQAELEARELQRRMQEEVTRREEAAVDAQQQKRSIQEELQHLRQSSEAEIQAKAQQVEAAERSRMRIEEEIRVVRLQLETTERQRGGAEDELQALRARAEEAEAQKRQAQEEAERLRRQVQDESQRKRQAEAELALRVKAEAEAAREKQRALQALDELKLQAEEAERWLCQAEAERARQVQVALETAQRSAEVELQSKRPSFAEKTAQLERTLQEEHVTVTQLREEAERRAQQQAEAERAREEAERELERWQLKANEALRLRLQAEEVAQQKSLAQADAEKQKEEAEREARRRGKAEEQAVRQRELAEQELEKQRQLTEGTAQQRLAAEQELIRLRAETEQGEHQRQLLEEELARLQHEATAATQKRQELEAELAKVRAEMEVLLASKARAEEESRSTSEKSKQRLEAEAGRFRELAEEAARLRALAEEARRHRELAEEDAARQRAEADGVLTEKLAAISEATRLKTEAEIALKEKEAENERLRRLAEDEAFQRRRLEEQAAQHKADIEERLAQLRKASESELERQKGLVEDTLRQRRQVEEEIMALKASFEKAAAGKAELELELGRIRSNAEDTMRSKELAEQEAARQRQLAAEEEQRRREAEERVQRSLAAEEEAARQRKVALEEVERLKAKVEEARRLRERAEQESARQLQLAQEAAQKRLQAEEKAHAFVVQQREEELQQTLQQEQNMLERLRSEAEAARRAAEEAEEAREQAEREAAQSRKQVEEAERLKQSAEEQAQAQAQAQAAAEKLRKEAEQEAARRAQAEQAALKQKQAADAEMEKHKKFAEQTLRQKAQVEQELTTLRLQLEETDHQKSILDEELQRLKAEVTEAARQRSQVEEELFSVRVQMEELGKLKARIEAENRALILRDKDNTQRFLEEEAEKMKQVAEEAARLSVAAQEAARLRQLAEEDLAQQRALAEKMLKEKMQAVQEATRLKAEAELLQQQKELAQEQARRLQADKEQMAQQLVEETQGFQRTLEAERQRQLEMSAEAERLKLRMAEMSRAQARAEEDAQRFRKQAEEIGEKLHRTELATQEKVTLVQTLEIQRQQSDQDAERLREAIAELEREKEKLKQEAKLLQLKSEEMQTVQQEQILQETQALQKSFLSEKDSLLQRERFIEQEKAKLEQLFQDEVAKAKQLQEEQQRQQQQMEQEKQELVASMEEARRRQREAEEGVRRKQEELQRLEQQRQQQEKLLAEENQRLRERLQRLEEEHRAALAHSEEIATSQAAATKALPNGRDALDGPSMEAEPEYTFEGLRQKVPAQQLQEAGILSMEELQRLTQGHTTVAELTQREDVRHYLKGGSSIAGLLLKPTNEKLSVYTALQRQLLSPGTALILLEAQAASGFLLDPVRNRRLTVNEAVKEGVVGPELHHKLLSAERAVTGYKDPYTGEQISLFQAMKKDLIVRDHGIRLLEAQIATGGIIDPVHSHRVPVDVAYQRGYFDEEMNRVLADPSDDTKGFFDPNTHENLTYLQLLERCVEDPETGLRLLPLTDKAAKGGELVYTDTEARDVFEKATVSAPFGKFQGKTVTIWEIINSEYFTAEQRRDLLRQFRTGRITVEKIIKIVITVVEEHERKGQLCFEGLRALVPAAELLDSGVISHEVYQQLQRGERSVREVAEADEVRQALRGTSVIAGVWLEEAGQKLSIYEALRRDLLQPEVAVALLEAQAGTGHIIDPATSARLTVDEAVRAGLVGPEMHEKLLSAEKAVTGYRDPYSGQSVSLFQALKKGLIPREQGLRLLDAQLSTGGIVDPSKSHRVPLDVAYARGYLDKETNRALTSPRDDARVYLDPSTREPVTYSQLQQRCRSDQLTGLSLLPLSEKAVRARQEEVYSELQARETLEKAKVEVPVGGFKGRALTVWELISSEYFTEEQRQELLRQFRTGKVTVEKVIKILITIVEEVETQRQERLSFSGLRAPVPASELLASKILSRTQFEQLKDGKTSVKDLSEVGSVRTLLQGSGCLAGIYLEDSKEKVTIYEAMRRGLLRASTATLLLEAQAATGFLVDPVRNQRLYVHEAVKAGVVGPELHEKLLSAEKAVTGYKDPYSGSTISLFQAMKKGLVLRDHAIRLLEAQIATGGIIDPVHSHRLPVDVAYQRGYFDEEMNRVLADPSDDTKGFFDPNTHENLTYLQLLERCVEDPETGLRLLPLRGAEKTEVVETTQVYTEEETRRAFEETQIDIPGGGSHGGSSMSLWEVMQSDMIPEDQRARLMADFQAGRVTKERMIIIIIEIIEKTEIIRQQNLASYDYVRRRLTAEDLYEARIISLETYNLFREGTKSLREVLEMESAWRYLYGTGSVAGVYLPGSRQTLTIYQALKKGLLSAEVARLLLEAQAATGFLLDPVKGERLTVDEAVRKGLVGPELHDRLLSAERAVTGYRDPYTEQPISLFQAMKKELIPAEEALRLLDAQLATGGIVDPRLGFHLPLEVAYQRGYLNKDTHDQLSEPSEVRSYVDPSTDERLSYTQLLKRCRRDDNSGQMLLPLSDARKLTFRGLRKQITVEELVRSQVMDEATALQLQEGLTSIEEVTKNLQKFLEGTSCIAGVFVDATKERLSVYQAMKKGIIRPGTAFELLEAQAATGYVIDPIKGLKLTVEEAVRMGIVGPEFKDKLLSAERAVTGYKDPYSGKLISLFQAMKKGLILKDHGIRLLEAQIATGGIIDPEESHRLPVEVAYKRGLFDEEMNEILTDPSDDTKGFFDPNTEENLTYLQLMERCITDPQTGLCLLPLKEKKRERKTSSKSSVRKRRVVIVDPETGKEMSVYEAYRKGLIDHQTYLELSEQECEWEEITISSSDGVVKSMIIDRRSGRQYDIGDAITKNLIDRSALDQYRAGTLSITEFADMLSGNAGGFRSRSSSVGSSSSYPISSAVPRTQLASWSDPTEETGPVAGILDTETLEKVSITEAMHRNLVDNITGQRLLEAQACTGGIIDPSTGERFPVTEAVNKGLVDKIMVDRINLAQKAFCGFEDPRTKTKMSAAQALKKGWLYYEAGQRFLEVQYLTGGLIEPDTPGRVSLDEALQRGTVDARTAQKLRDVSAYSKYLTCPKTKLKISYKDALDRSMVEEGTGLRLLEAAAQSSKGYYSPYSVSGSGSTAGSRTGSRTGSRAGSRRGSFDATGSGFSMTFSSSSYSSSGYGRRYASGPSASLGGPESAVA.

The interval Met1–Tyr1473 is globular 1. Arg21 carries the post-translational modification Phosphoserine. The residue at position 26 (Val26) is a Phosphotyrosine. A disordered region spans residues Arg111 to Thr158. The segment covering Asp137 to Gly154 has biased composition (basic and acidic residues). The interval Asp181–Pro406 is actin-binding. Calponin-homology (CH) domains lie at Arg185–Lys288 and Met301–Pro406. Residues Leu648 to Leu722 form a Spectrin 1 repeat. The residue at position 723 (Ser723) is a Phosphoserine. Spectrin repeat units lie at residues Lys743 to His827 and Leu840 to Gln933. Thr818 bears the Phosphothreonine mark. The 58-residue stretch at Arg944–Pro1001 folds into the SH3 domain. A Phosphoserine modification is found at Ser1050. The Spectrin 4 repeat unit spans residues Arg1318–Ala1418. Ser1438 carries the post-translational modification Phosphoserine. Coiled coils occupy residues Gln1472–Leu1692 and Ser1724–Ala2760. The interval Ile1474–Ser2758 is central fibrous rod domain. The tract at residues Glu1623 to Ser1647 is disordered. Ser1724 bears the Phosphoserine mark. Position 1728 is an N6-acetyllysine (Lys1728). 5 disordered regions span residues Val1741 to Arg1764, Ser1796 to Gln1846, Glu2096 to Glu2139, Leu2164 to Gln2188, and Arg2218 to Met2307. Basic and acidic residues-rich tracts occupy residues Asp1801–Gln1839, Glu2096–Arg2111, and Glu2119–Gln2131. The span at Ala2173–Ala2182 shows a compositional bias: low complexity. Positions Arg2218–Ala2261 are enriched in basic and acidic residues. Residues Glu2262 to Ala2275 show a composition bias toward low complexity. Residues Glu2276–Gln2291 show a composition bias toward basic and acidic residues. Ser2634 bears the Phosphoserine mark. Position 2639 is an N6-acetyllysine (Lys2639). The segment at Gln2671–Gln2710 is disordered. Over residues Glu2682 to Gln2710 the composition is skewed to basic and acidic residues. A globular 2 region spans residues Gln2759–Ala4687. Position 2777 is a phosphoserine (Ser2777). Tyr2784 is subject to Phosphotyrosine. Plectin repeat units lie at residues Gln2791–Val2828, Arg2829–Ala2866, Leu2867–His2904, His2905–Gly2942, Ile2943–Asn2980, and Ala2984–Gly3018. A Phosphoserine modification is found at Ser2805. At Thr2889 the chain carries Phosphothreonine. Tyr3036 is subject to Phosphotyrosine. Residues Lys3056 and Lys3094 each carry the N6-acetyllysine modification. 6 Plectin repeats span residues Ala3119–Val3156, Arg3157–Ala3194, Val3195–His3232, Glu3233–Gly3270, Leu3271–Asn3308, and Leu3311–Gly3346. Position 3365 is a phosphotyrosine (Tyr3365). Position 3423 is an N6-acetyllysine (Lys3423). Plectin repeat units follow at residues Arg3488–Ala3525, Thr3526–His3563, Glu3564–Ala3601, Ile3602–Asn3639, and Ala3643–Gly3677. Ser3583 is subject to Phosphoserine. A Phosphothreonine modification is found at Thr3788. Tyr3793 bears the Phosphotyrosine mark. Plectin repeat units lie at residues Trp3823–Ala3860, Arg3861–His3898, Asp3899–Ala3936, Leu3937–His3974, and Ser3978–Gly4011. A Phosphothreonine modification is found at Thr4033. Phosphoserine is present on Ser4057. Plectin repeat units lie at residues Gln4066 to Ala4103, Phe4104 to Lys4141, Asp4142 to Gly4179, Ile4180 to Asn4217, Thr4221 to Gly4255, and Arg4268 to Tyr4308. The tract at residues Gln4253–Ile4303 is binding to intermediate filaments. Ser4385, Ser4387, Ser4388, Ser4389, Ser4392, Ser4393, Ser4394, and Ser4395 each carry phosphoserine. A Phosphotyrosine modification is found at Tyr4396. A phosphoserine mark is found at Ser4399 and Ser4409. Plectin repeat units follow at residues Ser4411–Gly4448, Gln4449–Val4486, Asp4487–Gly4524, Gln4525–Ala4562, and Gln4563–Gly4600. Thr4414 is modified (phosphothreonine). A Phosphothreonine; by CDK1 modification is found at Thr4542. A phosphoserine mark is found at Ser4610 and Ser4616. Residues Tyr4614–Gly4674 are compositionally biased toward low complexity. Residues Tyr4614 to Ala4687 are disordered. Phosphotyrosine is present on Tyr4618. Phosphoserine is present on residues Ser4619, Ser4621, and Ser4625. Phosphothreonine is present on Thr4626. Positions Gly4628–Arg4643 are 4 X 4 AA tandem repeats of G-S-R-X. Residue Ser4629 is modified to Phosphoserine. Residues Arg4630 and Arg4643 each carry the omega-N-methylarginine modification. A phosphoserine mark is found at Ser4645 and Ser4678.

This sequence belongs to the plakin or cytolinker family. In terms of assembly, homodimer or homotetramer. Interacts (via actin-binding domain) with SYNE3. Interacts (via calponin-homology (CH) 1 domain) with VIM (via rod region). Interacts (via N-terminus) with DST isoform 2 (via N-terminus). Interacts with FER. Interacts with TOR1A. Interacts with ANK3. Identified in complexes that contain VIM, EZR, AHNAK, BFSP1, BFSP2, ANK2, PLEC, PRX and spectrin. In terms of processing, phosphorylated by CDK1; regulates dissociation from intermediate filaments during mitosis. Isoform 2 is phosphorylated on Ser-21 and Tyr-26. As to expression, widely expressed with highest expression in skeletal muscle and lowest in thymus.

It is found in the cytoplasm. The protein resides in the cytoskeleton. Its subcellular location is the cell junction. The protein localises to the hemidesmosome. It localises to the cell projection. It is found in the podosome. Its function is as follows. Interlinks intermediate filaments with microtubules and microfilaments and anchors intermediate filaments to desmosomes or hemidesmosomes. May be involved not only in the cross-linking and stabilization of cytoskeletal intermediate filaments network, but also in the regulation of their dynamics. The sequence is that of Plectin (Plec) from Rattus norvegicus (Rat).